The sequence spans 211 residues: Degradation in the endoplasmic reticulum protein 1 (211 aa).

Position 1 is an N-acetylmethionine (Met-1). Over 1–14 (MDAVILNLLGDIPL) the chain is Cytoplasmic. The helical transmembrane segment at 15–32 (VTRLWTIGCLVLSGLTSL) threads the bilayer. Over 33-67 (RIVDPGKVVYSYDLVFKKGQYGRLLYSIFDYGAFN) the chain is Lumenal. A helical transmembrane segment spans residues 68–85 (WISMINIFVSANHLSTLE). Residues 86 to 92 (NSFNLRR) lie on the Cytoplasmic side of the membrane. Residues 93–109 (KFCWIIFLLLVILVKMT) traverse the membrane as a helical segment. The Lumenal segment spans residues 110 to 117 (SIEQPAAS). The chain crosses the membrane as a helical span at residues 118–133 (LGVLLHENLVYYELKK). At 134 to 149 (NGNQMNVRFFGAIDVS) the chain is on the cytoplasmic side. The helical transmembrane segment at 150-165 (PSIFPIYMNAVMYFVY) threads the bilayer. The Lumenal segment spans residues 166 to 168 (KRS). The helical transmembrane segment at 169-189 (WLEIAMNFMPGHVIYYMDDII) threads the bilayer. Residues 190-211 (GKIYGIDLCKSPYDWFRNTETP) are Cytoplasmic-facing.

Belongs to the derlin family. In terms of assembly, component of the HRD1 ubiquitin ligase complex which contains the E3 ligase HRD1, its cofactors HRD3, USA1 and DER1, substrate recruiting factor YOS9 and CDC48-binding protein UBX2. Within the complex, interacts with USA1 (via C-terminus). In ERAD-L, HRD3 and YOS9 jointly bind misfolded glycoproteins in the endoplasmic reticulum (ER) lumen. Movement of ERAD-L substrates through the ER membrane is facilitated by HRD1 and DER1 which have lateral gates facing each other and which distort the membrane region between the lateral gates, making it much thinner than a normal phospholipid bilayer. Substrates insert into the membrane as a hairpin loop with one strand interacting with DER1 and the other with HRD1. The HRD1 complex interacts with the heterotrimeric CDC48-NPL4-UFD1 ATPase complex which is recruited by UBX2 via its interaction with CDC48 and which moves ubiquitinated substrates to the cytosol for targeting to the proteasome. In terms of processing, N-terminally acetylated by acetyltransferase NatB which enhances DER1 stability and is required for ERAD-L function.

It is found in the endoplasmic reticulum membrane. Its function is as follows. Component of the endoplasmic reticulum-associated degradation (ERAD) pathway. Specifically required for the ERAD-L pathway which mediates the degradation of proteins with misfolded lumenal domains within the endoplasmic reticulum (ER). Facilitates retrotranslocation of misfolded proteins from the ER lumen through the ER membrane in conjunction with HRD1. Both proteins have lateral gates facing each other and distort the membrane region between the lateral gates, making it much thinner than a normal phospholipid bilayer. Substrates insert into the membrane as a hairpin loop with one strand interacting with DER1 and the other with HRD1. The chain is Degradation in the endoplasmic reticulum protein 1 (DER1) from Saccharomyces cerevisiae (strain ATCC 204508 / S288c) (Baker's yeast).